Reading from the N-terminus, the 3948-residue chain is Hybrid PKS-NRPS synthetase ucsA (3948 aa).

Residues 11-440 (NEPIAVIGSG…GTNAHAILER (430 aa)) enclose the Ketosynthase family 3 (KS3) domain. Residues Cys-184, His-323, and His-363 each act as for beta-ketoacyl synthase activity in the active site. Residues 548 to 881 (IFTGQGAQWP…FSTAIGQLWA (334 aa)) are malonyl-CoA:ACP transacylase (MAT) domain. Positions 940–1079 (HPLLGTLGAD…GHIRLTITDF (140 aa)) are N-terminal hotdog fold. The interval 940-1254 (HPLLGTLGAD…IRLIPFAAAS (315 aa)) is dehydratase (DH) domain. Residues 940–1256 (HPLLGTLGAD…LIPFAAASEA (317 aa)) form the PKS/mFAS DH domain. The active-site Proton acceptor; for dehydratase activity is His-972. Residues 1098-1256 (MTEVDQNLFY…LIPFAAASEA (159 aa)) are C-terminal hotdog fold. The Proton donor; for dehydratase activity role is filled by Asp-1161. Residues 1299-1460 (LAHVVGQITH…LRAGFTGVET (162 aa)) are methyltransferase (MT) domain. The interval 1989 to 2165 (TYILFGLAGA…ASVIDIGPIS (177 aa)) is ketoreductase (KR) domain. In terms of domain architecture, Carrier 1 spans 2275-2357 (DVARVLRHAI…GLVDFAVDNL (83 aa)). The residue at position 2317 (Ser-2317) is an O-(pantetheine 4'-phosphoryl)serine. The span at 2381-2404 (PKAKTDAPAAAPTPASATAPGSKS) shows a compositional bias: low complexity. The segment at 2381–2473 (PKAKTDAPAA…SSQAASLESS (93 aa)) is disordered. Composition is skewed to polar residues over residues 2405-2418 (DGNV…ADQS) and 2426-2437 (PQPTAILTNATA). Residues 2441–2456 (PVSPSLSVTGSTSSAA) are compositionally biased toward low complexity. Polar residues predominate over residues 2462–2473 (PTSSQAASLESS). Positions 2489 to 2926 (EKTLPMSYGQ…PQIFNSSKVQ (438 aa)) are condensation (C) domain. The interval 2950-3355 (DIAAVQPTLT…GEFVLQARIK (406 aa)) is adenylation (A) (KR) domain. A disordered region spans residues 3483-3507 (PLTNKGGLKETPVARPTRYQNDPIP). The region spanning 3513–3592 (SSPFSSLDQV…QMASLLDGKD (80 aa)) is the Carrier 2 domain. O-(pantetheine 4'-phosphoryl)serine is present on Ser-3552. The tract at residues 3633 to 3852 (LTGATGFLGL…QFVPVEDVAN (220 aa)) is reductase (R) domain.

In the C-terminal section; belongs to the NRP synthetase family.

It participates in mycotoxin biosynthesis. Hybrid PKS-NRPS synthetase; part of the gene cluster that mediates the biosynthesis of UCS1025A, a member of the pyrrolizidinone family that acts as a strong telomerase inhibitor and displays potent antibacterial and antitumor properties. These compounds share a hemiaminal-containing pyrrolizidinone core fused with a gamma-lactone, giving a furopyrrolizidine that is connected to a decalin fragment. The polyketide synthase module (PKS) of the PKS-NRPS ucsA is responsible for the synthesis of the polyketide backbone via the condensation of an acetyl-CoA starter unit with 6 malonyl-CoA units. The downstream nonribosomal peptide synthetase (NRPS) module then amidates the carboxyl end of the polyketide with a 2S,3S-methylproline derived from L-isoleucine by the 2-oxoglutarate-dependent dioxygenase ucsF which converts L-isoleucine to (4S,5S)-4-methylpyrroline-5-carboxylate that is further converted to 2S,3S-methylproline by the pyrroline-5-carboxylate reductase ucsG. Reductive release of the completed aminoacyl polyketide from the assembly line can form the 3-pyrrolin-2-one structure via an intramolecular Knoevenagel reaction. Because ucsA lacks a designated enoylreductase (ER) domain, the required activity is provided the enoyl reductase ucsL. This keto acyclic precursor is the substrate of the Diels-Alderase ucsH, that catalyzes the Diels-Alder cycloaddition. Oxidation of the 3S-methyl group to a carboxylate by the cytochrome P450 monooxygenase ucsK allows an oxa-Michael cyclization that might involve the reductase/dehydrogenase ucsI and which furnishes the furopyrrolizidine. The oxidase ucsJ likely plays a critical role in stereoselective reduction of the C5-C6 double bond to afford the required R-configured carboxylate group. Further enolization and oxidation at C5 by an unidentified enzyme affords the last intermediate that can undergo oxa-Michael cyclization to yield UCS1025A. This is Hybrid PKS-NRPS synthetase ucsA from Acremonium sp.